We begin with the raw amino-acid sequence, 527 residues long: Protein Lilipod (527 aa).

At 1-22 (MDEEEEEEVTDLKLQLFHNTVR) the chain is on the extracellular side. A helical transmembrane segment spans residues 23–43 (EHIIFLLLIILLYSSSYVVVS). Residues 44–65 (RFRRRDRDDLYSNDEDEVLVYR) lie on the Cytoplasmic side of the membrane. Residues 66–86 (ISFWLCTFTLAVAEGAAMLLP) traverse the membrane as a helical segment. Over 87–117 (VSIASNEVLLLYPNSYYVKWLNSSLIQGLWN) the chain is Extracellular. The chain crosses the membrane as a helical span at residues 118-138 (HVFLFSNLSLFIFLPFVYLFS). Residues 139–160 (ESTGFVGNKKGILPRVYETFTV) lie on the Cytoplasmic side of the membrane. The helical transmembrane segment at 161–181 (FMLMAIIVLVLTAVLSAVFGI) threads the bilayer. Topologically, residues 182-194 (EKLQFFWFLNLGS) are extracellular. Residues 195–215 (VHLPFLYSCVSFLGVMLMLIC) form a helical membrane-spanning segment. Topologically, residues 216 to 341 (TPYGFVRLFG…LRTSSTFQRT (126 aa)) are cytoplasmic. A helical transmembrane segment spans residues 342-362 (FVYPLAMLLLLFCTAVTILLV). Residues 363 to 395 (VQNTLELLIGIKALPLSTRQFALGISSLSKLGP) are Extracellular-facing. The chain crosses the membrane as a helical span at residues 396–416 (FGAGLEVCLIFYLGATSVVGF). The Cytoplasmic segment spans residues 417–433 (YSMPFMRKVCPKRRQTS). A helical membrane pass occupies residues 434-454 (LPQLMLNCGFMLVLSSALPLL). At 455-468 (SRIIGITNFDLLGD) the chain is on the extracellular side. The helical transmembrane segment at 469-489 (FGAIEWLGNFQIVLLYNLVFG) threads the bilayer. At 490–527 (TTTALCLANKFTATVRRELRARLVENYVLFTNYISFIN) the chain is on the cytoplasmic side.

It belongs to the LIMR family. As to expression, in the ovary, detected in germline stem cells and their progeny. Also detected in the somatic follicular epithelium.

The protein resides in the cell membrane. Its function is as follows. Required during oogenesis to promote self-renewal of germline stem cells, probably by enhancing BMP signaling activity. This is Protein Lilipod from Drosophila melanogaster (Fruit fly).